The following is a 279-amino-acid chain: Shikimate dehydrogenase (NADP(+)) (279 aa).

Shikimate is bound by residues 20 to 22 (SRS) and Thr-67. The active-site Proton acceptor is the Lys-71. Asp-83 is a binding site for NADP(+). Residues Asn-92 and Asp-108 each coordinate shikimate. NADP(+) is bound by residues 134–138 (GAGGA) and Leu-223. Shikimate is bound at residue Tyr-225. Gly-246 contributes to the NADP(+) binding site.

Belongs to the shikimate dehydrogenase family. As to quaternary structure, homodimer.

It carries out the reaction shikimate + NADP(+) = 3-dehydroshikimate + NADPH + H(+). It participates in metabolic intermediate biosynthesis; chorismate biosynthesis; chorismate from D-erythrose 4-phosphate and phosphoenolpyruvate: step 4/7. Functionally, involved in the biosynthesis of the chorismate, which leads to the biosynthesis of aromatic amino acids. Catalyzes the reversible NADPH linked reduction of 3-dehydroshikimate (DHSA) to yield shikimate (SA). This Cereibacter sphaeroides (strain ATCC 17025 / ATH 2.4.3) (Rhodobacter sphaeroides) protein is Shikimate dehydrogenase (NADP(+)).